The chain runs to 461 residues: L-seryl-tRNA(Sec) selenium transferase (461 aa).

Residue K294 is modified to N6-(pyridoxal phosphate)lysine.

It belongs to the SelA family. Requires pyridoxal 5'-phosphate as cofactor.

The protein localises to the cytoplasm. The catalysed reaction is L-seryl-tRNA(Sec) + selenophosphate + H(+) = L-selenocysteinyl-tRNA(Sec) + phosphate. It functions in the pathway aminoacyl-tRNA biosynthesis; selenocysteinyl-tRNA(Sec) biosynthesis; selenocysteinyl-tRNA(Sec) from L-seryl-tRNA(Sec) (bacterial route): step 1/1. Functionally, converts seryl-tRNA(Sec) to selenocysteinyl-tRNA(Sec) required for selenoprotein biosynthesis. This Haemophilus influenzae (strain PittEE) protein is L-seryl-tRNA(Sec) selenium transferase.